Here is a 202-residue protein sequence, read N- to C-terminus: Sperm-specific H1/protamine-like protein type 1 (202 aa).

The segment covering 1–35 has biased composition (basic residues); the sequence is MPSPSRKSRSRSRSRSKSPKRSPAKKARKTPKKPR. Disordered stretches follow at residues 1 to 46 and 104 to 202; these read MPSP…PTTL and KTSA…QFAL. Residues 41 to 120 form the H15 domain; it reads KKPTTLSMIV…GATGSFRVGK (80 aa). Residues 126–156 show a composition bias toward basic residues; that stretch reads KKAKKAKSPKKKSSKKSKNKSNNAKAKKSPK. A compositionally biased stretch (low complexity) spans 177–187; it reads GARYPFRYQAY.

In terms of processing, OE1 and OE3 are produced by post-translational cleavage of a common precursor. Sperm.

It localises to the nucleus. Its subcellular location is the chromosome. Functionally, linker histones are implicated in chromatin remodeling and/or transcriptional regulation during spermiogenesis, the process of spermatid maturation into spermatozoa. Protamines substitute for histones in the chromatin of sperm during the haploid phase of spermatogenesis. They compact sperm DNA into a highly condensed, stable and inactive complex. The chain is Sperm-specific H1/protamine-like protein type 1 from Ostrea edulis (Native oyster).